Consider the following 129-residue polypeptide: Small ribosomal subunit protein uS8 (129 aa).

This sequence belongs to the universal ribosomal protein uS8 family. In terms of assembly, part of the 30S ribosomal subunit. Contacts proteins S5 and S12.

One of the primary rRNA binding proteins, it binds directly to 16S rRNA central domain where it helps coordinate assembly of the platform of the 30S subunit. The protein is Small ribosomal subunit protein uS8 of Legionella pneumophila (strain Corby).